A 398-amino-acid polypeptide reads, in one-letter code: NADH dehydrogenase [ubiquinone] iron-sulfur protein 2 (398 aa).

[4Fe-4S] cluster-binding residues include cysteine 261, cysteine 267, and cysteine 282.

It belongs to the complex I 49 kDa subunit family. Complex I is composed of about 45 different subunits. This is a component of the iron-sulfur (IP) fragment of the enzyme. [4Fe-4S] cluster serves as cofactor.

The protein resides in the mitochondrion. The enzyme catalyses a ubiquinone + NADH + 5 H(+)(in) = a ubiquinol + NAD(+) + 4 H(+)(out). Functionally, core subunit of the mitochondrial membrane respiratory chain NADH dehydrogenase (Complex I) that is believed to belong to the minimal assembly required for catalysis. Complex I functions in the transfer of electrons from NADH to the respiratory chain. The immediate electron acceptor for the enzyme is believed to be ubiquinone. Component of the iron-sulfur (IP) fragment of the enzyme. This Nephroselmis olivacea (Green alga) protein is NADH dehydrogenase [ubiquinone] iron-sulfur protein 2 (NAD7).